A 491-amino-acid chain; its full sequence is Cobyric acid synthase (491 aa).

In terms of domain architecture, GATase cobBQ-type spans alanine 253–leucine 429. Cysteine 334 (nucleophile) is an active-site residue. Histidine 421 is a catalytic residue.

The protein belongs to the CobB/CobQ family. CobQ subfamily.

It participates in cofactor biosynthesis; adenosylcobalamin biosynthesis. Catalyzes amidations at positions B, D, E, and G on adenosylcobyrinic A,C-diamide. NH(2) groups are provided by glutamine, and one molecule of ATP is hydrogenolyzed for each amidation. This Mycobacterium ulcerans (strain Agy99) protein is Cobyric acid synthase.